The chain runs to 134 residues: Perlwapin (134 aa).

WAP domains follow at residues 2–45 (GPNL…CVPK), 46–89 (PKPG…YRPE), and 90–132 (KPGS…EKPC). Intrachain disulfides connect C8-C34, C17-C38, C21-C33, C27-C42, C51-C77, C59-C82, C64-C76, C70-C85, C94-C121, C104-C124, C108-C120, and C114-C128.

In terms of tissue distribution, nacreous layer of shell.

In terms of biological role, inhibits growth of calcium carbonate crystals. May inhibit growth of certain crystallographic planes in the mineral phase of nacre in the shell. This chain is Perlwapin, found in Haliotis laevigata (Smooth Australian abalone).